The sequence spans 512 residues: MESPSYKNLIKAEDAQKKAGKRLLSSEWYPGFHVTPLTGWMNDPNGLIFFKGEYHLFYQYYPFAPVWGPMHWGHAKSRDLVHWETLPVALAPGDSFDRDGCFSGCAVDNNGVLTLIYTGHIVLSNDSLDAIREVQCMATSIDGIHFQKEGIVLEKAPMPQVAHFRDPRVWKENNHWFMVVGYRTDDEKHQGIGHVALYRSENLKDWIFVKTLLGDNSQLPLGKRAFMWECPDFFSLGNRSVLMFSPQGLKASGYKNRNLFQNGYILGKWQAPQFTPETSFQELDYGHDFYAAQRFEAKDGRQILIAWFDMWENQKPSQRDGWAGCMTLPRKLDLIDNKIVMTPVREMEILRQSEKIESVVTLSDAEHPFTMDSPLQEIELIFDLEKSSAYQAGLALRCNGKGQETLLYIDRSQNRIILDRNRSGQNVKGIRSCPLPNTSKVRLHIFLDRSSIEIFVGDDQTQGLYSISSRIFPDKDSLKGRLFAIEGYAVFDSFKRWTLQDANLAAFSSDAC.

Residues 40–43 (WMND), Gln59, Trp67, 102–103 (FS), 165–166 (RD), Glu229, and Trp311 each bind substrate. The active site involves Asp43.

Belongs to the glycosyl hydrolase 32 family.

It is found in the cytoplasm. It carries out the reaction Hydrolysis of terminal non-reducing beta-D-fructofuranoside residues in beta-D-fructofuranosides.. Its pathway is glycan biosynthesis; sucrose metabolism. This Zymomonas mobilis subsp. mobilis (strain ATCC 31821 / ZM4 / CP4) protein is Sucrose-6-phosphate hydrolase (sacA).